Consider the following 273-residue polypeptide: 2,3,4,5-tetrahydropyridine-2,6-dicarboxylate N-succinyltransferase (273 aa).

Residues arginine 104 and aspartate 141 each coordinate substrate.

The protein belongs to the transferase hexapeptide repeat family. In terms of assembly, homotrimer.

The protein resides in the cytoplasm. It catalyses the reaction (S)-2,3,4,5-tetrahydrodipicolinate + succinyl-CoA + H2O = (S)-2-succinylamino-6-oxoheptanedioate + CoA. It participates in amino-acid biosynthesis; L-lysine biosynthesis via DAP pathway; LL-2,6-diaminopimelate from (S)-tetrahydrodipicolinate (succinylase route): step 1/3. This is 2,3,4,5-tetrahydropyridine-2,6-dicarboxylate N-succinyltransferase from Neisseria gonorrhoeae (strain ATCC 700825 / FA 1090).